The following is a 1414-amino-acid chain: DNA-directed RNA polymerase subunit beta'' (1414 aa).

Zn(2+) contacts are provided by cysteine 220, cysteine 293, cysteine 300, and cysteine 303.

This sequence belongs to the RNA polymerase beta' chain family. RpoC2 subfamily. As to quaternary structure, in plastids the minimal PEP RNA polymerase catalytic core is composed of four subunits: alpha, beta, beta', and beta''. When a (nuclear-encoded) sigma factor is associated with the core the holoenzyme is formed, which can initiate transcription. Requires Zn(2+) as cofactor.

It localises to the plastid. The protein localises to the chloroplast. It carries out the reaction RNA(n) + a ribonucleoside 5'-triphosphate = RNA(n+1) + diphosphate. DNA-dependent RNA polymerase catalyzes the transcription of DNA into RNA using the four ribonucleoside triphosphates as substrates. The polypeptide is DNA-directed RNA polymerase subunit beta'' (Angiopteris evecta (Mule's foot fern)).